The following is a 754-amino-acid chain: DNA topoisomerase 4 subunit A (754 aa).

The Topo IIA-type catalytic domain maps to 38–501 (LPHIGDGLKP…EARALSETEL (464 aa)). The active-site O-(5'-phospho-DNA)-tyrosine intermediate is the tyrosine 127.

Belongs to the type II topoisomerase GyrA/ParC subunit family. ParC type 1 subfamily. In terms of assembly, heterotetramer composed of ParC and ParE.

The protein localises to the cell membrane. The catalysed reaction is ATP-dependent breakage, passage and rejoining of double-stranded DNA.. Topoisomerase IV is essential for chromosome segregation. It relaxes supercoiled DNA. Performs the decatenation events required during the replication of a circular DNA molecule. This Pseudomonas aeruginosa (strain ATCC 15692 / DSM 22644 / CIP 104116 / JCM 14847 / LMG 12228 / 1C / PRS 101 / PAO1) protein is DNA topoisomerase 4 subunit A.